The chain runs to 314 residues: 4-hydroxy-3-methylbut-2-enyl diphosphate reductase (314 aa).

Residue Cys-12 coordinates [4Fe-4S] cluster. Positions 41 and 74 each coordinate (2E)-4-hydroxy-3-methylbut-2-enyl diphosphate. His-41 and His-74 together coordinate dimethylallyl diphosphate. Residues His-41 and His-74 each contribute to the isopentenyl diphosphate site. Cys-96 serves as a coordination point for [4Fe-4S] cluster. His-124 serves as a coordination point for (2E)-4-hydroxy-3-methylbut-2-enyl diphosphate. Position 124 (His-124) interacts with dimethylallyl diphosphate. His-124 serves as a coordination point for isopentenyl diphosphate. Glu-126 acts as the Proton donor in catalysis. Thr-167 contributes to the (2E)-4-hydroxy-3-methylbut-2-enyl diphosphate binding site. [4Fe-4S] cluster is bound at residue Cys-197. Ser-225, Ser-226, Asn-227, and Ser-269 together coordinate (2E)-4-hydroxy-3-methylbut-2-enyl diphosphate. Dimethylallyl diphosphate is bound by residues Ser-225, Ser-226, Asn-227, and Ser-269. Ser-225, Ser-226, Asn-227, and Ser-269 together coordinate isopentenyl diphosphate.

This sequence belongs to the IspH family. It depends on [4Fe-4S] cluster as a cofactor.

The catalysed reaction is isopentenyl diphosphate + 2 oxidized [2Fe-2S]-[ferredoxin] + H2O = (2E)-4-hydroxy-3-methylbut-2-enyl diphosphate + 2 reduced [2Fe-2S]-[ferredoxin] + 2 H(+). The enzyme catalyses dimethylallyl diphosphate + 2 oxidized [2Fe-2S]-[ferredoxin] + H2O = (2E)-4-hydroxy-3-methylbut-2-enyl diphosphate + 2 reduced [2Fe-2S]-[ferredoxin] + 2 H(+). The protein operates within isoprenoid biosynthesis; dimethylallyl diphosphate biosynthesis; dimethylallyl diphosphate from (2E)-4-hydroxy-3-methylbutenyl diphosphate: step 1/1. Its pathway is isoprenoid biosynthesis; isopentenyl diphosphate biosynthesis via DXP pathway; isopentenyl diphosphate from 1-deoxy-D-xylulose 5-phosphate: step 6/6. In terms of biological role, catalyzes the conversion of 1-hydroxy-2-methyl-2-(E)-butenyl 4-diphosphate (HMBPP) into a mixture of isopentenyl diphosphate (IPP) and dimethylallyl diphosphate (DMAPP). Acts in the terminal step of the DOXP/MEP pathway for isoprenoid precursor biosynthesis. In Actinobacillus pleuropneumoniae serotype 7 (strain AP76), this protein is 4-hydroxy-3-methylbut-2-enyl diphosphate reductase.